A 295-amino-acid polypeptide reads, in one-letter code: Acetyl-coenzyme A carboxylase carboxyl transferase subunit beta (295 aa).

The tract at residues 1–20 (MSWLSKLMPSGIRTENTPAK) is disordered. In terms of domain architecture, CoA carboxyltransferase N-terminal spans 28–295 (LWEKCSNCGS…QPHPQDADAA (268 aa)). Zn(2+)-binding residues include Cys-32, Cys-35, Cys-51, and Cys-54. A C4-type zinc finger spans residues 32–54 (CSNCGSALYGPELEENLEVCPKC).

This sequence belongs to the AccD/PCCB family. As to quaternary structure, acetyl-CoA carboxylase is a heterohexamer composed of biotin carboxyl carrier protein (AccB), biotin carboxylase (AccC) and two subunits each of ACCase subunit alpha (AccA) and ACCase subunit beta (AccD). Zn(2+) is required as a cofactor.

The protein localises to the cytoplasm. The enzyme catalyses N(6)-carboxybiotinyl-L-lysyl-[protein] + acetyl-CoA = N(6)-biotinyl-L-lysyl-[protein] + malonyl-CoA. It participates in lipid metabolism; malonyl-CoA biosynthesis; malonyl-CoA from acetyl-CoA: step 1/1. Its function is as follows. Component of the acetyl coenzyme A carboxylase (ACC) complex. Biotin carboxylase (BC) catalyzes the carboxylation of biotin on its carrier protein (BCCP) and then the CO(2) group is transferred by the transcarboxylase to acetyl-CoA to form malonyl-CoA. The sequence is that of Acetyl-coenzyme A carboxylase carboxyl transferase subunit beta from Xanthomonas axonopodis pv. citri (strain 306).